A 338-amino-acid polypeptide reads, in one-letter code: Ornithine carbamoyltransferase (338 aa).

Residues 56-59, R107, and 134-137 each bind carbamoyl phosphate; these read STRT and HPTQ. L-ornithine is bound by residues N168, D232, and 236–237; that span reads SM. Residues 274-275 and R320 each bind carbamoyl phosphate; that span reads CL.

Belongs to the aspartate/ornithine carbamoyltransferase superfamily. OTCase family.

Its subcellular location is the cytoplasm. It carries out the reaction carbamoyl phosphate + L-ornithine = L-citrulline + phosphate + H(+). It functions in the pathway amino-acid biosynthesis; L-arginine biosynthesis; L-arginine from L-ornithine and carbamoyl phosphate: step 1/3. In terms of biological role, reversibly catalyzes the transfer of the carbamoyl group from carbamoyl phosphate (CP) to the N(epsilon) atom of ornithine (ORN) to produce L-citrulline. The polypeptide is Ornithine carbamoyltransferase (argI) (Buchnera aphidicola subsp. Acyrthosiphon pisum (strain APS) (Acyrthosiphon pisum symbiotic bacterium)).